A 256-amino-acid polypeptide reads, in one-letter code: Ribosomal RNA small subunit methyltransferase A (256 aa).

S-adenosyl-L-methionine is bound by residues His12, Leu14, Gly39, Glu60, Asp83, and Asn101.

Belongs to the class I-like SAM-binding methyltransferase superfamily. rRNA adenine N(6)-methyltransferase family. RsmA subfamily.

The protein resides in the cytoplasm. The enzyme catalyses adenosine(1518)/adenosine(1519) in 16S rRNA + 4 S-adenosyl-L-methionine = N(6)-dimethyladenosine(1518)/N(6)-dimethyladenosine(1519) in 16S rRNA + 4 S-adenosyl-L-homocysteine + 4 H(+). In terms of biological role, specifically dimethylates two adjacent adenosines (A1518 and A1519) in the loop of a conserved hairpin near the 3'-end of 16S rRNA in the 30S particle. May play a critical role in biogenesis of 30S subunits. The protein is Ribosomal RNA small subunit methyltransferase A of Nitrosomonas eutropha (strain DSM 101675 / C91 / Nm57).